We begin with the raw amino-acid sequence, 345 residues long: Cytoplasmic envelopment protein 2 (345 aa).

The interval 26-35 (KLVGKSRKHR) is nuclear localization signal 1. The nuclear export signal stretch occupies residues 55 to 63 (CILCQLLLL). The interval 90-94 (RRRRR) is nuclear localization signal 2.

The protein belongs to the herpesviridae cytoplasmic envelopment protein 2 family. In terms of assembly, interacts with cytoplasmic envelopment protein 3 and with the capsid. Interacts with host STING1; this interaction prevents viral DNA-triggered antiviral immune response.

The protein localises to the virion tegument. It is found in the host cytoplasm. It localises to the host nucleus. Its function is as follows. Plays a critical role in cytoplasmic virus egress. Participates in the final step of tegumentation and envelope acquisition within the host cytoplasm by directly interacting with the capsid. Upon virion binding to target cell, a signaling cascade is triggered to disrupt the interaction with the capsid, thereby preparing capsid uncoating. Additionally, antagonizes the viral DNA-triggered antiviral immune response by targeting host STING1 and preventing its dimerization and trafficking. In Human cytomegalovirus (strain AD169) (HHV-5), this protein is Cytoplasmic envelopment protein 2 (UL94).